The primary structure comprises 508 residues: Photosystem II CP47 reaction center protein (508 aa).

6 consecutive transmembrane segments (helical) span residues 21 to 36 (SVHI…WAGS), 101 to 115 (IVFS…IWHW), 140 to 156 (GIHL…FGAF), 203 to 218 (IAAG…FHLS), 237 to 252 (VLSS…AFVV), and 457 to 472 (TFAL…HGAR).

Belongs to the PsbB/PsbC family. PsbB subfamily. In terms of assembly, PSII is composed of 1 copy each of membrane proteins PsbA, PsbB, PsbC, PsbD, PsbE, PsbF, PsbH, PsbI, PsbJ, PsbK, PsbL, PsbM, PsbT, PsbX, PsbY, PsbZ, Psb30/Ycf12, at least 3 peripheral proteins of the oxygen-evolving complex and a large number of cofactors. It forms dimeric complexes. Binds multiple chlorophylls. PSII binds additional chlorophylls, carotenoids and specific lipids. serves as cofactor.

It localises to the plastid. The protein localises to the chloroplast thylakoid membrane. Its function is as follows. One of the components of the core complex of photosystem II (PSII). It binds chlorophyll and helps catalyze the primary light-induced photochemical processes of PSII. PSII is a light-driven water:plastoquinone oxidoreductase, using light energy to abstract electrons from H(2)O, generating O(2) and a proton gradient subsequently used for ATP formation. This is Photosystem II CP47 reaction center protein from Chloranthus spicatus (Chulantree).